The following is a 218-amino-acid chain: Peptidyl-prolyl cis-trans isomerase FKBP7 (218 aa).

The N-terminal stretch at 1-19 (MNLLFRLAVFLSLWCCSDA) is a signal peptide. Asparagine 41 and asparagine 128 each carry an N-linked (GlcNAc...) asparagine glycan. The PPIase FKBP-type domain occupies 49-141 (GDLLNAHYDG…MFEIELYAVT (93 aa)). 2 consecutive EF-hand domains span residues 141 to 176 (TKGP…DFEK) and 185 to 218 (YQKA…HDEL). The Ca(2+) site is built by aspartate 154, aspartate 156, aspartate 158, glutamine 160, glutamate 165, aspartate 198, asparagine 200, aspartate 202, and glutamate 209. The tract at residues 197–218 (NDHNGDGFISPKEYNVHQHDEL) is disordered. Positions 215-218 (HDEL) match the Prevents secretion from ER motif.

Post-translationally, glycosylated. As to expression, expressed at highest levels in heart, lung and testis. Weakly expressed in kidney and lymph node. Little or no expression detected in brain, thymus, spleen and liver.

The protein resides in the endoplasmic reticulum lumen. It catalyses the reaction [protein]-peptidylproline (omega=180) = [protein]-peptidylproline (omega=0). Functionally, PPIases accelerate the folding of proteins during protein synthesis. This is Peptidyl-prolyl cis-trans isomerase FKBP7 (Fkbp7) from Mus musculus (Mouse).